Reading from the N-terminus, the 117-residue chain is Minor capsid protein VP2 (117 aa).

Belongs to the lagovirus VP2 protein family. In terms of assembly, homooligomer. The portal-like structure consists in 12 copies of VP2. Interacts with capsid protein VP1.

The protein resides in the virion. The protein localises to the host cytoplasm. In terms of biological role, minor structural protein that forms a portal-like structure at a unique three-fold axis of symmetry, following binding to the host receptor. The channel formed by VP2 may allow the delivery of the viral genome through the host endosomal membrane. The protein is Minor capsid protein VP2 of Oryctolagus cuniculus (Rabbit).